Reading from the N-terminus, the 179-residue chain is NAD(P)H-quinone oxidoreductase subunit J (179 aa).

The protein belongs to the complex I 30 kDa subunit family. As to quaternary structure, NDH-1 can be composed of about 15 different subunits; different subcomplexes with different compositions have been identified which probably have different functions. In terms of processing, in at one experiment the initiator methionine has been seen to be kept and removed.

It is found in the cellular thylakoid membrane. It carries out the reaction a plastoquinone + NADH + (n+1) H(+)(in) = a plastoquinol + NAD(+) + n H(+)(out). The catalysed reaction is a plastoquinone + NADPH + (n+1) H(+)(in) = a plastoquinol + NADP(+) + n H(+)(out). Functionally, NDH-1 shuttles electrons from an unknown electron donor, via FMN and iron-sulfur (Fe-S) centers, to quinones in the respiratory and/or the photosynthetic chain. The immediate electron acceptor for the enzyme in this species is believed to be plastoquinone. Couples the redox reaction to proton translocation, and thus conserves the redox energy in a proton gradient. Cyanobacterial NDH-1 also plays a role in inorganic carbon-concentration. The chain is NAD(P)H-quinone oxidoreductase subunit J from Synechocystis sp. (strain ATCC 27184 / PCC 6803 / Kazusa).